A 180-amino-acid chain; its full sequence is MAGVKYPGQDPVDLDIYQSSHMVDYQPYRKHKYSRVTPQEQAKLDAQLRDKEFYRPIPNPNPKLTDGYPAFKRPHMTAKDLGLPGFFPSQEHEATREDERKFTSTCHFTYPASHDLHLAQGDPNQVLQSADFPCLVDPKHQPAAEMAKGYLLLPGCPCLHCHIVKVPILNRWGPLMPFYQ.

Microtubule inner protein component of sperm flagellar doublet microtubules. As to expression, testis-specific. Detected in the germ cell lineage at all stages.

Its subcellular location is the nucleus. It localises to the cytoplasm. The protein resides in the cytoskeleton. It is found in the flagellum axoneme. Microtubule inner protein (MIP) part of the dynein-decorated doublet microtubules (DMTs) in flagella axoneme. The sequence is that of Protein SPMIP9 from Homo sapiens (Human).